The chain runs to 627 residues: Glutamine--fructose-6-phosphate aminotransferase [isomerizing] (627 aa).

Residue cysteine 2 is the Nucleophile; for GATase activity of the active site. The 223-residue stretch at 2-224 (CGIVGYIGTQ…NGEIARLTPL (223 aa)) folds into the Glutamine amidotransferase type-2 domain. 2 consecutive SIS domains span residues 293–442 (LPEN…HRQT) and 476–617 (LAHE…VDQP). Catalysis depends on lysine 622, which acts as the For Fru-6P isomerization activity.

In terms of assembly, homodimer.

It localises to the cytoplasm. The enzyme catalyses D-fructose 6-phosphate + L-glutamine = D-glucosamine 6-phosphate + L-glutamate. Its function is as follows. Catalyzes the first step in hexosamine metabolism, converting fructose-6P into glucosamine-6P using glutamine as a nitrogen source. The chain is Glutamine--fructose-6-phosphate aminotransferase [isomerizing] from Nostoc sp. (strain PCC 9229).